The chain runs to 355 residues: Histidine biosynthesis bifunctional protein HisB (355 aa).

The segment at 1-166 (MKQKILFIDR…DITKEIIKRN (166 aa)) is histidinol-phosphatase. The active-site Nucleophile is D9. Mg(2+) is bound by residues D9 and D11. D11 functions as the Proton donor in the catalytic mechanism. Zn(2+) contacts are provided by C93, H95, C101, and C103. D130 is a binding site for Mg(2+). Residues 167-355 (RYREVIRETK…NTLPTSKGIL (189 aa)) are imidazoleglycerol-phosphate dehydratase.

The protein in the N-terminal section; belongs to the histidinol-phosphatase family. In the C-terminal section; belongs to the imidazoleglycerol-phosphate dehydratase family. Mg(2+) is required as a cofactor. It depends on Zn(2+) as a cofactor.

Its subcellular location is the cytoplasm. The catalysed reaction is D-erythro-1-(imidazol-4-yl)glycerol 3-phosphate = 3-(imidazol-4-yl)-2-oxopropyl phosphate + H2O. It catalyses the reaction L-histidinol phosphate + H2O = L-histidinol + phosphate. Its pathway is amino-acid biosynthesis; L-histidine biosynthesis; L-histidine from 5-phospho-alpha-D-ribose 1-diphosphate: step 6/9. The protein operates within amino-acid biosynthesis; L-histidine biosynthesis; L-histidine from 5-phospho-alpha-D-ribose 1-diphosphate: step 8/9. The polypeptide is Histidine biosynthesis bifunctional protein HisB (Buchnera aphidicola subsp. Schizaphis graminum (strain Sg)).